The primary structure comprises 239 residues: Large ribosomal subunit protein uL2 (239 aa).

Belongs to the universal ribosomal protein uL2 family.

It is found in the cytoplasm. The sequence is that of Large ribosomal subunit protein uL2 (RPL8) from Encephalitozoon cuniculi (strain GB-M1) (Microsporidian parasite).